A 135-amino-acid chain; its full sequence is Inner membrane protein YgfX (135 aa).

The Cytoplasmic segment spans residues 1–11; the sequence is MVLWQSDLRVS. A not required to inhibit FtsZ or MreB polymerization region spans residues 1–96; the sequence is MVLWQSDLRV…APWMIKSGMM (96 aa). A helical transmembrane segment spans residues 12–32; sequence WRAQWLSLLIHGLVAAVILLM. Residues 33-37 are Periplasmic-facing; the sequence is PWPLS. Residues 38-54 form a helical membrane-spanning segment; it reads YTPLWMVLLSLVVFDCV. Residues 55–135 lie on the Cytoplasmic side of the membrane; that stretch reads RSQRRINARQ…RILLQQETQR (81 aa).

As to quaternary structure, interacts with MreB and FtsZ; interaction with the latter requires FtsZ residues 33-49.

It is found in the cell inner membrane. In terms of biological role, a probable inner membrane protein. Has been shown not to be a toxin, no effects on growth are seen in LB or minimal medium up to 6 or 21 hours (respectively) after induction of expression. Interacts with cytoskeletal proteins FtsZ and MreB; inhibits FtsZ GTP-dependent polymerization as well as MreB ATP-dependent polymerization. Restores production of prodigiosin antibiotic (Pig) in Serratia strains with deletions of sdhE-ygfX; overexpression of this protein and CptB also restores Pig production to a slightly lesser extent in Serratia. This chain is Inner membrane protein YgfX, found in Escherichia coli (strain K12).